The following is a 156-amino-acid chain: Transcription antitermination protein NusB (156 aa).

Belongs to the NusB family.

In terms of biological role, involved in transcription antitermination. Required for transcription of ribosomal RNA (rRNA) genes. Binds specifically to the boxA antiterminator sequence of the ribosomal RNA (rrn) operons. The chain is Transcription antitermination protein NusB from Mycobacterium bovis (strain ATCC BAA-935 / AF2122/97).